A 552-amino-acid polypeptide reads, in one-letter code: Antibiotic resistance protein MAB_2355c (552 aa).

ABC transporter domains lie at 4–270 and 332–552; these read VQLD…RRWD and AKRA…PQWV. ATP is bound by residues 37 to 44 and 364 to 371; these read GPNGTGKT and GGNGTGKS.

This sequence belongs to the ABC transporter superfamily. ABCF family.

It carries out the reaction ATP + H2O = ADP + phosphate + H(+). With respect to regulation, the ATPase activity can be inhibited by ribosome-targeting antibiotics. In terms of biological role, exhibits ATP hydrolysis activity and contributes to macrolide resistance by ribosome protection. Can also hydrolyze GTP, TTP and CTP but to a lesser extent than ATP. In vitro, rescues the transcription and translation activities affected by macrolides. Increased expression correlates with increased resistance to clarithromycin, one of the main drugs used to treat M.abscessus. The chain is Antibiotic resistance protein MAB_2355c from Mycobacteroides abscessus (strain ATCC 19977 / DSM 44196 / CCUG 20993 / CIP 104536 / JCM 13569 / NCTC 13031 / TMC 1543 / L948) (Mycobacterium abscessus).